A 180-amino-acid chain; its full sequence is NADH-quinone oxidoreductase subunit I (180 aa).

2 consecutive 4Fe-4S ferredoxin-type domains span residues 48 to 80 and 90 to 119; these read IVLT…LQKA and EFFR…LTPD. Positions 60, 63, 66, 70, 99, 102, 105, and 109 each coordinate [4Fe-4S] cluster.

This sequence belongs to the complex I 23 kDa subunit family. In terms of assembly, NDH-1 is composed of 13 different subunits. Subunits NuoA, H, J, K, L, M, N constitute the membrane sector of the complex. The cofactor is [4Fe-4S] cluster.

Its subcellular location is the cell inner membrane. The enzyme catalyses a quinone + NADH + 5 H(+)(in) = a quinol + NAD(+) + 4 H(+)(out). In terms of biological role, NDH-1 shuttles electrons from NADH, via FMN and iron-sulfur (Fe-S) centers, to quinones in the respiratory chain. The immediate electron acceptor for the enzyme in this species is believed to be ubiquinone. Couples the redox reaction to proton translocation (for every two electrons transferred, four hydrogen ions are translocated across the cytoplasmic membrane), and thus conserves the redox energy in a proton gradient. This is NADH-quinone oxidoreductase subunit I from Cronobacter sakazakii (strain ATCC BAA-894) (Enterobacter sakazakii).